Reading from the N-terminus, the 423-residue chain is Histone deacetylase 14, chloroplastic (423 aa).

The N-terminal 44 residues, 1-44 (MSMALIVRPFFVPGSAGISGSRNICKKNQWRKYLLKPSGSSINC), are a transit peptide targeting the chloroplast. Residues 62-392 (DARLIYSVSA…FRALLGEDSL (331 aa)) form a histone deacetylase region. Histidine 202 acts as the Proton donor/acceptor in catalysis. Zn(2+)-binding residues include aspartate 239, histidine 241, and aspartate 326.

This sequence belongs to the histone deacetylase family. As to quaternary structure, interacts with PP2A2. Zn(2+) serves as cofactor. Expressed in stems, leaves, flowers, siliques and mature seeds.

It is found in the nucleus. The protein resides in the cytoplasm. Its subcellular location is the plastid. The protein localises to the chloroplast stroma. It localises to the mitochondrion. It carries out the reaction N-acetylserotonin + H2O = serotonin + acetate. The catalysed reaction is N-acetyltyramine + H2O = tyramine + acetate. The enzyme catalyses N-acetyltryptamine + H2O = tryptamine + acetate. It catalyses the reaction melatonin + H2O = 5-methoxytryptamine + acetate. Its activity is inhibited by trichostatin A (TSA), a known histone deacetylase inhibitor. Regulates lysine acetylation levels of plastid proteins related to photosynthesis. Involved in the regulation of the activation state of RuBisCO, which is controlled by lysine acetylation of RuBisCO activase under low-light conditions. Associates with alpha- and beta-tubulins and deacetylate alpha-tubulin. Does not seem to be required for the cellular patterning in the root epidermis. Involved in the regulation of melatonin biosynthesis by catalyzing the deacetylation of N-acetylserotonin to produce serotonin. N-acetylserotonin is methylated by acetylserotonin O-methyltransferase (ASMT) to produce melatonin (N-acetyl-5-methoxytryptamine). Deacetylates melatonin to produce 5-methoxytryptamine. In vitro, deacetylates N-acetyltyramine and N-acetyltryptamine to produce tyramine and tryptamine, respectively. The polypeptide is Histone deacetylase 14, chloroplastic (Arabidopsis thaliana (Mouse-ear cress)).